Here is a 118-residue protein sequence, read N- to C-terminus: Cysteine--tRNA ligase (118 aa).

Cys28 lines the Zn(2+) pocket. The 'HIGH' region motif lies at 30–40 (PTVYNYIHIGN).

Belongs to the class-I aminoacyl-tRNA synthetase family. As to quaternary structure, monomer. The cofactor is Zn(2+).

It localises to the cytoplasm. It catalyses the reaction tRNA(Cys) + L-cysteine + ATP = L-cysteinyl-tRNA(Cys) + AMP + diphosphate. This chain is Cysteine--tRNA ligase (cysS), found in Staphylococcus xylosus.